The primary structure comprises 1771 residues: Gag-Pro-Pol polyprotein (1771 aa).

The N-myristoyl glycine; by host moiety is linked to residue Gly2. A propeptide spanning residues 101 to 161 is cleaved from the precursor; sequence AAVAQTEEIL…TKKPKRFPVL (61 aa). 2 stretches are compositionally biased toward polar residues: residues 113–125 and 140–152; these read NSQT…SQNP and KSSS…LSST. The segment at 113 to 178 is disordered; that stretch reads NSQTDLTKTS…DPEDPNPSEV (66 aa). Positions 202–205 match the PPXY motif motif; the sequence is PPPY. Positions 210–213 match the PTAP/PSAP motif motif; sequence PSAP. Positions 216-257 form a coiled coil; that stretch reads MAVVNPKEELKEKIAQLEEQIKLEELHQALISKLQKLKTGNE. The interval 260 to 279 is disordered; sequence THPDTAGGLSRTPHWPGQHI. Positions 335 to 338 match the PTAP/PSAP motif motif; it reads ATAP. 2 consecutive CCHC-type zinc fingers follow at residues 547 to 564 and 576 to 593; these read GCCF…NCHE and GLCP…ECKS. Positions 592-626 are disordered; it reads KSKTDNQGNPIPPHQGNRVEGPAPGPETSLWGSQL. Residues 780–856 enclose the Peptidase A2 domain; it reads FTGLIDTGAD…LPVNLWGRDL (77 aa). Asp785 serves as the catalytic Protease; shared with dimeric partner. A G-patch domain is found at 867–913; it reads PNDIVTAQMLAQGYSPGKGLGKKENGILHPIPNQGQSNKKGFGNFLT. One can recognise a Reverse transcriptase domain in the interval 959-1147; the sequence is LEAGHITESS…DPYTYLGFEL (189 aa). Residues Asp1024, Asp1099, Asp1100, Asp1370, Glu1399, Asp1420, and Asp1484 each coordinate Mg(2+). An RNase H type-1 domain is found at 1361-1492; the sequence is LNNALLVFTD…ADLATKIVAS (132 aa). Residues 1496–1537 form an Integrase-type zinc finger; it reads TNLESAQNAHTLHHLNAQTLRLMFNIPREQARQIVKQCPICV. Zn(2+) contacts are provided by His1505, His1509, Cys1533, and Cys1536. An Integrase catalytic domain is found at 1550–1719; sequence RGLFPNMIWQ…NPKKQFAMVK (170 aa). Positions 1561, 1618, and 1654 each coordinate Mg(2+). The segment at residues 1716–1765 is a DNA-binding region (integrase-type); that stretch reads AMVKWKDPLDNTWHGPDPVLIWGRGSVCVYSQTYDAARWLPERLVRQVSN.

This sequence belongs to the retroviral Pol polyprotein family. Homodimer. As to quaternary structure, interacts with the G-patch peptide. In terms of assembly, interacts with the reverse transcriptase/ribonuclease H. Homotrimer. Mg(2+) serves as cofactor. Released by autocatalytic processing. The protease can undergo further autoprocessing to yield 2 shorter but enzymatically active forms of 12 kDa and 13 kDa. Post-translationally, myristoylated. Myristoylation of the matrix (MA) domain mediates the transport and binding of Gag polyproteins to the host plasma membrane and is required for the assembly of viral particles. In terms of processing, specific enzymatic cleavages in vivo yield mature proteins.

Its subcellular location is the virion. The enzyme catalyses DNA(n) + a 2'-deoxyribonucleoside 5'-triphosphate = DNA(n+1) + diphosphate. It catalyses the reaction Endonucleolytic cleavage to 5'-phosphomonoester.. The catalysed reaction is dUTP + H2O = dUMP + diphosphate + H(+). Matrix protein. Its function is as follows. Nucleocapsid protein p14: Nucleocapsid protein. Functionally, capsid protein. In terms of biological role, the aspartyl protease mediates proteolytic cleavages of Gag and Gag-Pol polyproteins during or shortly after the release of the virion from the plasma membrane. Cleavages take place as an ordered, step-wise cascade to yield mature proteins. This process is called maturation. Displays maximal activity during the budding process just prior to particle release from the cell. Enhances the activity of the reverse transcriptase. May be part of the mature RT. Its function is as follows. RT is a multifunctional enzyme that converts the viral dimeric RNA genome into dsDNA in the cytoplasm, shortly after virus entry into the cell. This enzyme displays a DNA polymerase activity that can copy either DNA or RNA templates, and a ribonuclease H (RNase H) activity that cleaves the RNA strand of RNA-DNA heteroduplexes in a partially processive 3' to 5' endonucleasic mode. Conversion of viral genomic RNA into dsDNA requires many steps. A tRNA binds to the primer-binding site (PBS) situated at the 5' end of the viral RNA. RT uses the 3' end of the tRNA primer to perfom a short round of RNA-dependent minus-strand DNA synthesis. The reading proceeds through the U5 region and ends after the repeated (R) region which is present at both ends of viral RNA. The portion of the RNA-DNA heteroduplex is digested by the RNase H, resulting in a ssDNA product attached to the tRNA primer. This ssDNA/tRNA hybridizes with the identical R region situated at the 3' end of viral RNA. This template exchange, known as minus-strand DNA strong stop transfer, can be either intra- or intermolecular. RT uses the 3' end of this newly synthesized short ssDNA to perfom the RNA-dependent minus-strand DNA synthesis of the whole template. RNase H digests the RNA template except for a polypurine tract (PPT) situated at the 5' end of the genome. It is not clear if both polymerase and RNase H activities are simultaneous. RNase H probably can proceed both in a polymerase-dependent (RNA cut into small fragments by the same RT performing DNA synthesis) and a polymerase-independent mode (cleavage of remaining RNA fragments by free RTs). Secondly, RT performs DNA-directed plus-strand DNA synthesis using the PPT that has not been removed by RNase H as primers. PPT and tRNA primers are then removed by RNase H. The 3' and 5' ssDNA PBS regions hybridize to form a circular dsDNA intermediate. Strand displacement synthesis by RT to the PBS and PPT ends produces a blunt ended, linear dsDNA copy of the viral genome that includes long terminal repeats (LTRs) at both ends. Functionally, catalyzes viral DNA integration into the host chromosome, by performing a series of DNA cutting and joining reactions. This chain is Gag-Pro-Pol polyprotein (gag-pro-pol), found in Macaca mulatta (Rhesus macaque).